Reading from the N-terminus, the 153-residue chain is 3-hydroxyacyl-[acyl-carrier-protein] dehydratase FabZ (153 aa).

The active site involves histidine 54.

This sequence belongs to the thioester dehydratase family. FabZ subfamily.

It localises to the cytoplasm. It catalyses the reaction a (3R)-hydroxyacyl-[ACP] = a (2E)-enoyl-[ACP] + H2O. Functionally, involved in unsaturated fatty acids biosynthesis. Catalyzes the dehydration of short chain beta-hydroxyacyl-ACPs and long chain saturated and unsaturated beta-hydroxyacyl-ACPs. The polypeptide is 3-hydroxyacyl-[acyl-carrier-protein] dehydratase FabZ (Shewanella denitrificans (strain OS217 / ATCC BAA-1090 / DSM 15013)).